The following is a 366-amino-acid chain: Phospho-N-acetylmuramoyl-pentapeptide-transferase (366 aa).

A run of 10 helical transmembrane segments spans residues 3–23 (QIIISGSVAFLVSIFLTPILI), 55–75 (IAIIAGITIGYLVTNIYSYFA), 80–100 (FTASGLLVLGLMLGLGATGFA), 118–138 (AKLISQLAIALVFGLLVLRFP), 161–181 (IAFGGGVLGTIVFLIFIYVVV), 197–217 (LAAGATAFVMGAYTLIAFWQF), 238–258 (IAVLAAGGLGATLGFLWWNAA), 262–282 (IFMGDTGSLALGGLVAGISVV), 290–310 (VIIGALFVIEVASVAIQIAVF), and 341–361 (FWLIAIMAVIAGMAVFYGDWL).

It belongs to the glycosyltransferase 4 family. MraY subfamily. Mg(2+) is required as a cofactor.

Its subcellular location is the cell membrane. It catalyses the reaction UDP-N-acetyl-alpha-D-muramoyl-L-alanyl-gamma-D-glutamyl-meso-2,6-diaminopimeloyl-D-alanyl-D-alanine + di-trans,octa-cis-undecaprenyl phosphate = di-trans,octa-cis-undecaprenyl diphospho-N-acetyl-alpha-D-muramoyl-L-alanyl-D-glutamyl-meso-2,6-diaminopimeloyl-D-alanyl-D-alanine + UMP. It functions in the pathway cell wall biogenesis; peptidoglycan biosynthesis. Its function is as follows. Catalyzes the initial step of the lipid cycle reactions in the biosynthesis of the cell wall peptidoglycan: transfers peptidoglycan precursor phospho-MurNAc-pentapeptide from UDP-MurNAc-pentapeptide onto the lipid carrier undecaprenyl phosphate, yielding undecaprenyl-pyrophosphoryl-MurNAc-pentapeptide, known as lipid I. The chain is Phospho-N-acetylmuramoyl-pentapeptide-transferase from Corynebacterium efficiens (strain DSM 44549 / YS-314 / AJ 12310 / JCM 11189 / NBRC 100395).